We begin with the raw amino-acid sequence, 234 residues long: Thiamine-phosphate synthase (234 aa).

4-amino-2-methyl-5-(diphosphooxymethyl)pyrimidine contacts are provided by residues 65-69 (QYRNK) and N97. D98 and D117 together coordinate Mg(2+). Position 136 (S136) interacts with 4-amino-2-methyl-5-(diphosphooxymethyl)pyrimidine. 2-[(2R,5Z)-2-carboxy-4-methylthiazol-5(2H)-ylidene]ethyl phosphate is bound at residue 163–165 (SHT). K166 contributes to the 4-amino-2-methyl-5-(diphosphooxymethyl)pyrimidine binding site. 2-[(2R,5Z)-2-carboxy-4-methylthiazol-5(2H)-ylidene]ethyl phosphate contacts are provided by residues G192 and 212 to 213 (IS).

The protein belongs to the thiamine-phosphate synthase family. It depends on Mg(2+) as a cofactor.

The catalysed reaction is 2-[(2R,5Z)-2-carboxy-4-methylthiazol-5(2H)-ylidene]ethyl phosphate + 4-amino-2-methyl-5-(diphosphooxymethyl)pyrimidine + 2 H(+) = thiamine phosphate + CO2 + diphosphate. It catalyses the reaction 2-(2-carboxy-4-methylthiazol-5-yl)ethyl phosphate + 4-amino-2-methyl-5-(diphosphooxymethyl)pyrimidine + 2 H(+) = thiamine phosphate + CO2 + diphosphate. It carries out the reaction 4-methyl-5-(2-phosphooxyethyl)-thiazole + 4-amino-2-methyl-5-(diphosphooxymethyl)pyrimidine + H(+) = thiamine phosphate + diphosphate. The protein operates within cofactor biosynthesis; thiamine diphosphate biosynthesis; thiamine phosphate from 4-amino-2-methyl-5-diphosphomethylpyrimidine and 4-methyl-5-(2-phosphoethyl)-thiazole: step 1/1. In terms of biological role, condenses 4-methyl-5-(beta-hydroxyethyl)thiazole monophosphate (THZ-P) and 2-methyl-4-amino-5-hydroxymethyl pyrimidine pyrophosphate (HMP-PP) to form thiamine monophosphate (TMP). The polypeptide is Thiamine-phosphate synthase (Xylella fastidiosa (strain 9a5c)).